Here is a 52-residue protein sequence, read N- to C-terminus: Large ribosomal subunit protein bL32c (52 aa).

The protein belongs to the bacterial ribosomal protein bL32 family.

The protein localises to the plastid. The protein resides in the chloroplast. This is Large ribosomal subunit protein bL32c from Aethionema grandiflorum (Persian stone-cress).